The following is a 226-amino-acid chain: MHIMEGFLPVEHAIGWSVASAPVVAYGLYSINKKINKNPEQRMLLGVAAAFTFVLSALKMPSVTGSCSHPTGTGLGAILFGPSAVAPIGAVVLLFQALLLAHGGLTTLGANIFSMAIVGPFAAAAVFRLARAARFPFGVGVFLAASLGDLLTYVTTACQLAFAFPDPVGGFTASLAKFAGVFALTQIPLAISEGLLTVVVMNALLRFNREELGSLNIEGNGQEVQA.

Helical transmembrane passes span 6–26, 43–63, 75–95, 107–127, 135–155, and 181–201; these read GFLPVEHAIGWSVASAPVVAY, MLLGVAAAFTFVLSALKMPSV, LGAILFGPSAVAPIGAVVLLF, TLGANIFSMAIVGPFAAAAVF, FPFGVGVFLAASLGDLLTYVT, and VFALTQIPLAISEGLLTVVVM.

The protein belongs to the CbiM family. As to quaternary structure, forms an energy-coupling factor (ECF) transporter complex composed of an ATP-binding protein (A component, CbiO), a transmembrane protein (T component, CbiQ) and 2 possible substrate-capture proteins (S components, CbiM and CbiN) of unknown stoichimetry.

Its subcellular location is the cell inner membrane. The protein operates within cofactor biosynthesis; adenosylcobalamin biosynthesis. Functionally, part of the energy-coupling factor (ECF) transporter complex CbiMNOQ involved in cobalt import. The chain is Cobalt transport protein CbiM 1 (cbim1) from Pelobacter propionicus (strain DSM 2379 / NBRC 103807 / OttBd1).